Reading from the N-terminus, the 98-residue chain is HssA/B-like protein 34 (98 aa).

Disordered stretches follow at residues 1–26 (MTLF…SFGS) and 60–98 (AKSS…SCSC). A compositionally biased stretch (gly residues) spans 60–72 (AKSSGGSCGGKGG). Positions 73-88 (SHNHGHGHGHGPHGHG) are enriched in basic residues. Residues 89–98 (GKGSGGSCSC) show a composition bias toward gly residues.

It belongs to the hssA/B family.

This chain is HssA/B-like protein 34 (hssl34), found in Dictyostelium discoideum (Social amoeba).